A 426-amino-acid polypeptide reads, in one-letter code: Na(+)/H(+) antiporter 1 (426 aa).

Transmembrane regions (helical) follow at residues 1–21 (MELM…SLVA), 29–49 (IPDI…LQII), 57–77 (IFEY…AFTM), 95–115 (ITFL…LNLP), 120–140 (VGYL…IPVF), 158–178 (IFND…FGLF), 184–204 (LIDL…LAKI), 208–228 (IIIH…GAML), 236–256 (LLPS…IMGL), 286–306 (VFIF…NYFI), 309–329 (LLVA…LGLI), and 382–402 (IAGT…ILEA).

This sequence belongs to the monovalent cation:proton antiporter 1 (CPA1) transporter (TC 2.A.36) family.

It is found in the cell membrane. This is a Na(+)/H(+) antiporter. Can also transport lithium. This is Na(+)/H(+) antiporter 1 from Methanocaldococcus jannaschii (strain ATCC 43067 / DSM 2661 / JAL-1 / JCM 10045 / NBRC 100440) (Methanococcus jannaschii).